The following is a 92-amino-acid chain: N(2)-fixation sustaining protein CowN (92 aa).

It belongs to the CowN family.

In terms of biological role, is required to sustain N(2)-dependent growth in the presence of low levels of carbon monoxide (CO). Probably acts by protecting the N(2) fixation ability of the nitrogenase complex, which is inactivated in the presence of CO. In Cereibacter sphaeroides (strain KD131 / KCTC 12085) (Rhodobacter sphaeroides), this protein is N(2)-fixation sustaining protein CowN.